The sequence spans 394 residues: Putative bacilysin exporter BacE (394 aa).

The next 11 helical transmembrane spans lie at 11-31, 43-63, 69-89, 92-112, 142-162, 166-186, 215-235, 244-264, 288-308, 332-352, and 353-373; these read LLYGQALSFMGDYCVLPALLI, SGVIVVRSIPMVFQPFLGVLV, IKIMLWTDIIRGIIFLGLTFL, GEYPLIFLALLFITYGSGVFF, IIVGAAAGGLFLLGGSVELAV, GVTYLVSAFFISRIKLQFVPI, MFTMITMALLWGVVYSYFPIV, IGNFILTFCIGFGGFIGAALV, LFLFTPIFAVSVIAAILFFIA, IFSVAEASIGLCISIGSMFIN, and ILSAPVIMGLIVVIVCGLFLH.

This sequence belongs to the major facilitator superfamily. Drug:H(+) antiporter-3 (DHA3) (TC 2.A.1.21) family.

The protein resides in the cell membrane. Part of the bacilysin biosynthesis operon. May be involved in self-resistance to bacilysin by permitting efflux of this antibiotic. The chain is Putative bacilysin exporter BacE (bacE) from Bacillus subtilis (strain 168).